A 134-amino-acid chain; its full sequence is MALKIRLARAGSKKRPYYHVVVADVRAPRDGRFIETVGSWNPVLPKDAERVKLDAERIQHWIAQGAQPTDRVLRFLDQAGIAKRPSRNNPTKGEPGKKAQERLALAKQAEEEASAKAAEAAAAAAAPAEEAASE.

Residues 79-134 (AGIAKRPSRNNPTKGEPGKKAQERLALAKQAEEEASAKAAEAAAAAAAPAEEAASE) form a disordered region. Low complexity predominate over residues 115–134 (AKAAEAAAAAAAPAEEAASE).

Belongs to the bacterial ribosomal protein bS16 family.

This Brucella abortus (strain S19) protein is Small ribosomal subunit protein bS16.